Consider the following 378-residue polypeptide: Ecotin-like protein 3 (378 aa).

2 disordered regions span residues H191–P216 and P238–P378. A compositionally biased stretch (polar residues) spans N274–E287. The span at R337 to M348 shows a compositional bias: basic and acidic residues. A compositionally biased stretch (low complexity) spans K362–P378.

Belongs to the protease inhibitor I11 (ecotin) family.

In Leishmania infantum, this protein is Ecotin-like protein 3.